The following is a 241-amino-acid chain: Triosephosphate isomerase (241 aa).

9-11 (NWK) contacts substrate. The active-site Electrophile is the His-96. Catalysis depends on Glu-165, which acts as the Proton acceptor. Residues Gly-171, Ser-204, and 225–226 (GG) contribute to the substrate site.

This sequence belongs to the triosephosphate isomerase family. In terms of assembly, homodimer.

The protein resides in the cytoplasm. The enzyme catalyses D-glyceraldehyde 3-phosphate = dihydroxyacetone phosphate. Its pathway is carbohydrate biosynthesis; gluconeogenesis. It functions in the pathway carbohydrate degradation; glycolysis; D-glyceraldehyde 3-phosphate from glycerone phosphate: step 1/1. Functionally, involved in the gluconeogenesis. Catalyzes stereospecifically the conversion of dihydroxyacetone phosphate (DHAP) to D-glyceraldehyde-3-phosphate (G3P). This Prochlorococcus marinus (strain MIT 9312) protein is Triosephosphate isomerase.